The primary structure comprises 468 residues: uncharacterized protein (468 aa).

6 helical membrane-spanning segments follow: residues Ile59 to Ile79, Thr135 to Val155, Val215 to Leu235, Thr297 to Val317, His348 to Tyr368, and Val385 to Phe405.

It is found in the membrane. This is an uncharacterized protein from Caenorhabditis elegans.